The sequence spans 237 residues: Uridylate kinase (237 aa).

10–13 contacts ATP; it reads KLSG. G52 serves as a coordination point for UMP. ATP is bound by residues G53 and R57. Residues D72 and 133-140 contribute to the UMP site; that span reads TGNPFFTT. Positions 160, 166, and 169 each coordinate ATP.

The protein belongs to the UMP kinase family. Homohexamer.

Its subcellular location is the cytoplasm. The catalysed reaction is UMP + ATP = UDP + ADP. Its pathway is pyrimidine metabolism; CTP biosynthesis via de novo pathway; UDP from UMP (UMPK route): step 1/1. Inhibited by UTP. In terms of biological role, catalyzes the reversible phosphorylation of UMP to UDP. This chain is Uridylate kinase, found in Thiobacillus denitrificans (strain ATCC 25259 / T1).